Reading from the N-terminus, the 493-residue chain is Cholesteryl ester transfer protein (493 aa).

A signal peptide spans 1–17 (MLAATVLTLALLGNVHA). 2 N-linked (GlcNAc...) asparagine glycosylation sites follow: asparagine 59 and asparagine 105. Cysteine 160 and cysteine 201 are oxidised to a cystine. Asparagine 257, asparagine 358, and asparagine 413 each carry an N-linked (GlcNAc...) asparagine glycan.

Belongs to the BPI/LBP/Plunc superfamily. BPI/LBP family. In terms of tissue distribution, probably primarily expressed in liver and adipose tissues. Detected in adrenal gland, mesenteric fat, spleen and aorta.

The protein resides in the secreted. The catalysed reaction is cholesteryl (9Z-octadecenoate)(in) = cholesteryl (9Z-octadecenoate)(out). It carries out the reaction 1,2,3-tri-(9Z-octadecenoyl)-glycerol(in) = 1,2,3-tri-(9Z-octadecenoyl)-glycerol(out). The enzyme catalyses cholesteryl (9Z,12Z)-octadecadienoate(in) = cholesteryl (9Z,12Z)-octadecadienoate(out). In terms of biological role, involved in the transfer of neutral lipids, including cholesteryl ester and triglyceride, among lipoprotein particles. Allows the net movement of cholesteryl ester from high density lipoproteins/HDL to triglyceride-rich very low density lipoproteins/VLDL, and the equimolar transport of triglyceride from VLDL to HDL. Regulates the reverse cholesterol transport, by which excess cholesterol is removed from peripheral tissues and returned to the liver for elimination. The sequence is that of Cholesteryl ester transfer protein from Macaca fascicularis (Crab-eating macaque).